Consider the following 577-residue polypeptide: MFS-type transporter CPUR_05422 (577 aa).

The interval 1–49 is disordered; sequence MSAMSAMGKPEHGSATTSDLEHRATESSLEKQDVEAAPPGPVKPVDPSP. Residues 19–34 are compositionally biased toward basic and acidic residues; sequence DLEHRATESSLEKQDV. The segment covering 38–47 has biased composition (pro residues); the sequence is PPGPVKPVDP. The next 14 helical transmembrane spans lie at 52–72, 93–113, 123–143, 157–177, 184–204, 212–232, 249–269, 285–305, 326–346, 359–379, 383–403, 416–436, 449–469, and 525–545; these read STLK…LVAV, DVGW…LLFG, VVLL…GAAP, VGSA…IPLA, GLMG…GGAF, WCFY…FFYF, ILSL…CLLL, IIVL…VQIC, FLTT…IPIW, GIQL…GGLL, IGYY…GAGL, VIGY…TPNL, MGIA…VAVG, and VFIV…CMEW. A disordered region spans residues 554–577; it reads PPAGPPAGAPTESAPVETKAAGHT.

This sequence belongs to the major facilitator superfamily. TCR/Tet family.

It localises to the membrane. Functionally, MFS-type transporter; part of the ergochrome gene cluster responsible for the typical purple-black color of the ergot sclerotia. The ergochrome gene cluster produces several ergot pigments including the yellow ergochrome secalonic acid and its derivatives, as well as the red anthraquinones endocrocin and clavorubin. This Claviceps purpurea (strain 20.1) (Ergot fungus) protein is MFS-type transporter CPUR_05422.